A 292-amino-acid chain; its full sequence is 33 kDa chaperonin (292 aa).

2 disulfides stabilise this stretch: C237/C239 and C270/C273.

Belongs to the HSP33 family. In terms of processing, under oxidizing conditions two disulfide bonds are formed involving the reactive cysteines. Under reducing conditions zinc is bound to the reactive cysteines and the protein is inactive.

The protein localises to the cytoplasm. Redox regulated molecular chaperone. Protects both thermally unfolding and oxidatively damaged proteins from irreversible aggregation. Plays an important role in the bacterial defense system toward oxidative stress. The sequence is that of 33 kDa chaperonin from Lachnoclostridium phytofermentans (strain ATCC 700394 / DSM 18823 / ISDg) (Clostridium phytofermentans).